Consider the following 148-residue polypeptide: Transcriptional regulator MraZ (148 aa).

2 consecutive SpoVT-AbrB domains span residues glutamate 5–glutamate 53 and serine 82–alanine 125.

This sequence belongs to the MraZ family. As to quaternary structure, forms oligomers.

The protein resides in the cytoplasm. It is found in the nucleoid. This chain is Transcriptional regulator MraZ, found in Xylella fastidiosa (strain 9a5c).